A 274-amino-acid chain; its full sequence is NH(3)-dependent NAD(+) synthetase (274 aa).

46–53 (GISGGQDS) lines the ATP pocket. Asp-52 is a binding site for Mg(2+). Deamido-NAD(+) is bound at residue Arg-140. Thr-160 lines the ATP pocket. Position 165 (Glu-165) interacts with Mg(2+). 2 residues coordinate deamido-NAD(+): Lys-173 and Asp-180. Residues Lys-189 and Thr-211 each contribute to the ATP site. Position 260 to 261 (260 to 261 (HK)) interacts with deamido-NAD(+).

It belongs to the NAD synthetase family. In terms of assembly, homodimer.

It carries out the reaction deamido-NAD(+) + NH4(+) + ATP = AMP + diphosphate + NAD(+) + H(+). Its pathway is cofactor biosynthesis; NAD(+) biosynthesis; NAD(+) from deamido-NAD(+) (ammonia route): step 1/1. In terms of biological role, catalyzes the ATP-dependent amidation of deamido-NAD to form NAD. Uses ammonia as a nitrogen source. In Listeria welshimeri serovar 6b (strain ATCC 35897 / DSM 20650 / CCUG 15529 / CIP 8149 / NCTC 11857 / SLCC 5334 / V8), this protein is NH(3)-dependent NAD(+) synthetase.